The following is a 330-amino-acid chain: Aspartate--ammonia ligase (330 aa).

It belongs to the class-II aminoacyl-tRNA synthetase family. AsnA subfamily.

Its subcellular location is the cytoplasm. The catalysed reaction is L-aspartate + NH4(+) + ATP = L-asparagine + AMP + diphosphate + H(+). The protein operates within amino-acid biosynthesis; L-asparagine biosynthesis; L-asparagine from L-aspartate (ammonia route): step 1/1. The polypeptide is Aspartate--ammonia ligase (Streptococcus pyogenes serotype M49 (strain NZ131)).